We begin with the raw amino-acid sequence, 614 residues long: Polyamine transporter 2 (614 aa).

The interval 1–40 (MSDQESVVSFNSQNTSMVDVEGQQPQQYVPSKTNSRANQL) is disordered. Residues 1–173 (MSDQESVVSF…WPSWVRWSYT (173 aa)) are Cytoplasmic-facing. Phosphoserine is present on Ser50. Polar residues predominate over residues 99–122 (RTASALSRTRTKQLNRTATNSSST). The segment at 99-144 (RTASALSRTRTKQLNRTATNSSSTGKEEMEEEETEEREDQSGENEL) is disordered. Over residues 126–144 (EMEEEETEEREDQSGENEL) the composition is skewed to acidic residues. A helical transmembrane segment spans residues 174–194 (VLLSILVICVAYGSACISGGL). Residues 195 to 206 (GTVEKKYHVGME) lie on the Extracellular side of the membrane. The helical transmembrane segment at 207 to 227 (AAILSCSLMVIGFSLGPLIWS) threads the bilayer. Residues 228 to 236 (PVSDLYGRR) lie on the Cytoplasmic side of the membrane. A helical transmembrane segment spans residues 237–257 (VAYFVSMGLYVIFNIPCALAP). The Extracellular segment spans residues 258–266 (NLGCLLACR). A helical membrane pass occupies residues 267 to 287 (FLCGVWSSSGLCLVGGSIADM). Residues 288-297 (FPSETRGKAI) lie on the Cytoplasmic side of the membrane. A helical transmembrane segment spans residues 298–318 (AFFAFAPYVGPVVGPLVNGFI). Residues 319–326 (SVSTGRMD) are Extracellular-facing. Residues 327–347 (LIFWVNMAFAGVMWIISSAIP) form a helical membrane-spanning segment. The Cytoplasmic segment spans residues 348-407 (ETYAPVILKRKAARLRKETGNPKIMTEQEAQGVSMSEMMRACLLRPLYFAVTEPVLVATC). A helical transmembrane segment spans residues 408-428 (FYVCLIYSLLYAFFFAFPVIF). The Extracellular portion of the chain corresponds to 429–437 (GELYGYKDN). Residues 438–458 (LVGLMFIPIVIGALWALATTF) form a helical membrane-spanning segment. At 459 to 478 (YCENKYLQIVKQRKPTPEDR) the chain is on the cytoplasmic side. A helical membrane pass occupies residues 479 to 499 (LLGAKIGAPFAAIALWILGAT). Residues 500 to 503 (AYKH) lie on the Extracellular side of the membrane. A helical transmembrane segment spans residues 504–524 (IIWVGPASAGLAFGFGMVLIY). Residues 525–541 (YSLNNYIIDCYVQYASS) are Cytoplasmic-facing. A helical membrane pass occupies residues 542 to 562 (ALATKVFLRSAGGAAFPLFTI). At 563–574 (QMYHKLNLHWGS) the chain is on the extracellular side. The chain crosses the membrane as a helical span at residues 575-595 (WLLAFISTAMIALPFAFSYWG). Residues 596–614 (KGLRHKLSKKDYSIDSVEM) lie on the Cytoplasmic side of the membrane.

This sequence belongs to the major facilitator superfamily. DHA1 family. Polyamines/proton antiporter (TC 2.A.1.2.16) subfamily.

It is found in the cell membrane. Functionally, cell membrane polyamine/proton antiporter, involved in the detoxification of excess polyamines in the cytoplasm. Recognizes spermine, but not spermidine. This chain is Polyamine transporter 2 (TPO2), found in Saccharomyces cerevisiae (strain ATCC 204508 / S288c) (Baker's yeast).